The following is a 163-amino-acid chain: Nucleotide-binding protein HS_0688 (163 aa).

Belongs to the YajQ family.

Its function is as follows. Nucleotide-binding protein. The chain is Nucleotide-binding protein HS_0688 from Histophilus somni (strain 129Pt) (Haemophilus somnus).